Reading from the N-terminus, the 203-residue chain is Signal peptidase I (203 aa).

The interval 1 to 26 (MSSESDSPTPQTPPAQPAASQPKADS) is disordered. At 1–33 (MSSESDSPTPQTPPAQPAASQPKADSPLMEGIK) the chain is on the cytoplasmic side. A compositionally biased stretch (low complexity) spans 17–26 (PAASQPKADS). Residues 34 to 50 (TIGLSVVLALGIRTFVA) form a helical membrane-spanning segment. Topologically, residues 51–203 (EARYIPSESM…LGELGPPPSY (153 aa)) are extracellular. Residues serine 59 and lysine 109 contribute to the active site.

It belongs to the peptidase S26 family.

The protein localises to the cell membrane. It catalyses the reaction Cleavage of hydrophobic, N-terminal signal or leader sequences from secreted and periplasmic proteins.. The protein is Signal peptidase I (lepB) of Leptolyngbya laminosa (Phormidium laminosum).